Consider the following 303-residue polypeptide: N-acetylmuramic acid 6-phosphate etherase (303 aa).

The region spanning Ala60 to Lys223 is the SIS domain. Glu88 serves as the catalytic Proton donor. Glu119 is a catalytic residue.

It belongs to the GCKR-like family. MurNAc-6-P etherase subfamily. In terms of assembly, homodimer.

It carries out the reaction N-acetyl-D-muramate 6-phosphate + H2O = N-acetyl-D-glucosamine 6-phosphate + (R)-lactate. It participates in amino-sugar metabolism; 1,6-anhydro-N-acetylmuramate degradation. The protein operates within amino-sugar metabolism; N-acetylmuramate degradation. It functions in the pathway cell wall biogenesis; peptidoglycan recycling. Specifically catalyzes the cleavage of the D-lactyl ether substituent of MurNAc 6-phosphate, producing GlcNAc 6-phosphate and D-lactate. Together with AnmK, is also required for the utilization of anhydro-N-acetylmuramic acid (anhMurNAc) either imported from the medium or derived from its own cell wall murein, and thus plays a role in cell wall recycling. The protein is N-acetylmuramic acid 6-phosphate etherase of Pectobacterium atrosepticum (strain SCRI 1043 / ATCC BAA-672) (Erwinia carotovora subsp. atroseptica).